Consider the following 229-residue polypeptide: Uracil-DNA glycosylase (229 aa).

D65 acts as the Proton acceptor in catalysis.

It belongs to the uracil-DNA glycosylase (UDG) superfamily. UNG family.

The protein localises to the cytoplasm. It catalyses the reaction Hydrolyzes single-stranded DNA or mismatched double-stranded DNA and polynucleotides, releasing free uracil.. In terms of biological role, excises uracil residues from the DNA which can arise as a result of misincorporation of dUMP residues by DNA polymerase or due to deamination of cytosine. This is Uracil-DNA glycosylase from Latilactobacillus sakei subsp. sakei (strain 23K) (Lactobacillus sakei subsp. sakei).